The following is a 285-amino-acid chain: MAKLSQNWKKLSSKIQDKPKNGSVKKPTLKGKISKKVKASISEKLSTTNNTTTTTTTTTSTTDVVPIASSTKPTATPLEYTLWTQNHTINVSHIPKTPKPLPLSRNDSRKLDPGKYVAIDCEFVGIGKDGEESALARISIINYYGVVLLDTYVRPQERVTDWRTWVSGIQSYHMQDAIDFKTAQLKTMELINNKILVGHAVNNDLDILFLSHPKSMIRDTCKFPKFREIAGGKSPSLKKLIKHFIQVDIQIGQHSSVEDARATMLLFRLFKREIEQSMRNRNKRQ.

The span at 1–14 (MAKLSQNWKKLSSK) shows a compositional bias: polar residues. Residues 1–35 (MAKLSQNWKKLSSKIQDKPKNGSVKKPTLKGKISK) are disordered. An Exonuclease domain is found at 116-267 (YVAIDCEFVG…EDARATMLLF (152 aa)).

Belongs to the REXO4 family.

The protein localises to the nucleus. Exoribonuclease involved in ribosome biosynthesis. Involved in the processing of ITS1, the internal transcribed spacer localized between the 18S and 5.8S rRNAs. In Candida albicans (strain SC5314 / ATCC MYA-2876) (Yeast), this protein is RNA exonuclease 4 (REX4).